The primary structure comprises 569 residues: Alpha-keto-acid decarboxylase (569 aa).

E57 is a thiamine diphosphate binding site. A thiamine pyrophosphate binding region spans residues T392–I474. Positions 442, 469, and 471 each coordinate Mg(2+).

It belongs to the TPP enzyme family. A metal cation is required as a cofactor. The cofactor is thiamine diphosphate.

Its function is as follows. Decarboxylates branched-chain and aromatic alpha-keto acids to aldehydes. This is Alpha-keto-acid decarboxylase (kdc) from Mycobacterium leprae (strain TN).